The primary structure comprises 346 residues: Putative serine/threonine-protein kinase K06H7.1 (346 aa).

The Protein kinase domain maps to 20–287; that stretch reads YKVVQKLGEG…KLFKLLEDVM (268 aa). ATP-binding positions include 26 to 34 and lysine 50; that span reads LGEGGCGSV. Residue aspartate 141 is the Proton acceptor of the active site. Residues 302 to 326 are disordered; the sequence is PEKKKNPASQGNKFGLGKKGTKESG.

It belongs to the protein kinase superfamily. Ser/Thr protein kinase family.

The enzyme catalyses L-seryl-[protein] + ATP = O-phospho-L-seryl-[protein] + ADP + H(+). It catalyses the reaction L-threonyl-[protein] + ATP = O-phospho-L-threonyl-[protein] + ADP + H(+). The polypeptide is Putative serine/threonine-protein kinase K06H7.1 (Caenorhabditis elegans).